A 30-amino-acid chain; its full sequence is Brevinin-2Ej (30 aa).

A disulfide bridge links Cys24 with Cys30.

Expressed by the skin glands.

Its subcellular location is the secreted. In terms of biological role, shows antibacterial activity against representative Gram-negative and Gram-positive bacterial species, and hemolytic activity. The sequence is that of Brevinin-2Ej from Pelophylax ridibundus (Marsh frog).